The sequence spans 1373 residues: Poly(A) RNA polymerase gld-2 homolog B (1373 aa).

A compositionally biased stretch (low complexity) spans 75–91 (NSCHSSNSSSNTSNNNN). Disordered stretches follow at residues 75-155 (NSCH…QEKQ), 175-340 (SDCK…FWKT), 425-543 (PDST…QQQK), 734-770 (PQQQ…FADG), 802-866 (CGSG…ALGS), and 880-928 (HPLH…PTPV). Over residues 96 to 112 (GQQQQPLHYCNSNNSHS) the composition is skewed to polar residues. Low complexity-rich tracts occupy residues 130–152 (QQQQ…QMQQ), 180–219 (SDSN…SCSN), 228–251 (NENS…NTSS), and 274–284 (ESGSSEGAAES). Polar residues-rich tracts occupy residues 295–340 (CNSN…FWKT) and 430–442 (KSSS…NMIR). The segment covering 443–485 (SSSNGNSNFSRHQYGHQSTGSGYQQQQQRYRNAQNVYQQYQHQ) has biased composition (low complexity). Residues 486–502 (QQHHAQQHTHPHFRRKH) are compositionally biased toward basic residues. Composition is skewed to low complexity over residues 735–753 (QQQQ…GTSS) and 819–844 (AGAL…SGTS). The segment covering 855–866 (PSISPTPSALGS) has biased composition (polar residues). A compositionally biased stretch (low complexity) spans 880–890 (HPLHQQHPPSH). The sufficent for interaction with Dcr-2 stretch occupies residues 945–1373 (RYLAQARNIE…FAETTAAHVA (429 aa)). Mg(2+) contacts are provided by Asp-1029 and Asp-1031. A PAP-associated domain is found at 1211-1272 (TLGEHLLGFF…NIEEPFDLSN (62 aa)). Residues 1320 to 1341 (LQQHQQQFEQQLHHPISGQQRS) are compositionally biased toward low complexity. The interval 1320 to 1359 (LQQHQQQFEQQLHHPISGQQRSAGGGGDGANPVPSTLNPD) is disordered.

Belongs to the DNA polymerase type-B-like family. GLD2 subfamily. Interacts with orb, an RNA-binding protein, generating an ovarian cytoplasmic polyadenylation complex. Interacts (via C-terminus) with Dcr-2. It depends on Mg(2+) as a cofactor. Mn(2+) serves as cofactor. In terms of tissue distribution, expressed in ovaries. Not expressed in adult males.

The protein localises to the cytoplasm. It catalyses the reaction RNA(n) + ATP = RNA(n)-3'-adenine ribonucleotide + diphosphate. In terms of biological role, cytoplasmic poly(A) RNA polymerase that adds successive AMP monomers to the 3'-end of specific maternal RNAs (bcd, Tl, and tor), forming a poly(A) tail, during late oogenesis and early embryogenesis. In contrast to the canonical nuclear poly(A) RNA polymerase, it only adds poly(A) to selected cytoplasmic mRNAs. Required for localization of mRNAs to both poles of the egg, to recruit or maintain known centrosomal proteins with two types of microtubule organizing centers (MTOCs): the central MTOC that forms between the meiosis II tandem spindles and the centrosomes of the mitotic spindle. Required at the final stage of oogenesis for meiosis I metaphase arrest and for progression beyond this stage. Functions with the RNA-binding protein Dcr-2 to promote cytoplasmic polyadenylation and translational activation of certain mRNAs such as Tl and r2d2. As a consequence, is involved in regulating Toll immune signaling and promoting resistance to fungal infection. This Drosophila melanogaster (Fruit fly) protein is Poly(A) RNA polymerase gld-2 homolog B (wisp).